Consider the following 422-residue polypeptide: L-threonine dehydratase biosynthetic IlvA (422 aa).

Lysine 56 carries the N6-(pyridoxal phosphate)lysine modification. Pyridoxal 5'-phosphate contacts are provided by residues asparagine 83, 189–193, and serine 315; that span reads GGGGL. One can recognise an ACT-like domain in the interval 339 to 413; sequence HYFILNFPQR…FDPSNIYINE (75 aa).

This sequence belongs to the serine/threonine dehydratase family. As to quaternary structure, homotetramer. Requires pyridoxal 5'-phosphate as cofactor.

It catalyses the reaction L-threonine = 2-oxobutanoate + NH4(+). It functions in the pathway amino-acid biosynthesis; L-isoleucine biosynthesis; 2-oxobutanoate from L-threonine: step 1/1. Catalyzes the anaerobic formation of alpha-ketobutyrate and ammonia from threonine in a two-step reaction. The first step involved a dehydration of threonine and a production of enamine intermediates (aminocrotonate), which tautomerizes to its imine form (iminobutyrate). Both intermediates are unstable and short-lived. The second step is the nonenzymatic hydrolysis of the enamine/imine intermediates to form 2-ketobutyrate and free ammonia. In the low water environment of the cell, the second step is accelerated by RidA. This is L-threonine dehydratase biosynthetic IlvA (ilvA) from Staphylococcus aureus (strain Mu50 / ATCC 700699).